The following is a 466-amino-acid chain: Siroheme synthase (466 aa).

Positions 1–203 (MNYLPIFIDI…GKIQEAKADL (203 aa)) are precorrin-2 dehydrogenase /sirohydrochlorin ferrochelatase. NAD(+) contacts are provided by residues 22 to 23 (SI) and 43 to 44 (KS). Ser128 is subject to Phosphoserine. The interval 216-466 (GAVYLVGGGP…FDAKPISSKK (251 aa)) is uroporphyrinogen-III C-methyltransferase. Pro225 is an S-adenosyl-L-methionine binding site. Residue Asp248 is the Proton acceptor of the active site. The Proton donor role is filled by Lys270. S-adenosyl-L-methionine is bound by residues 301–303 (GGD), Ile306, 331–332 (TA), Met383, and Gly412.

It in the N-terminal section; belongs to the precorrin-2 dehydrogenase / sirohydrochlorin ferrochelatase family. The protein in the C-terminal section; belongs to the precorrin methyltransferase family.

The enzyme catalyses uroporphyrinogen III + 2 S-adenosyl-L-methionine = precorrin-2 + 2 S-adenosyl-L-homocysteine + H(+). It catalyses the reaction precorrin-2 + NAD(+) = sirohydrochlorin + NADH + 2 H(+). It carries out the reaction siroheme + 2 H(+) = sirohydrochlorin + Fe(2+). It participates in cofactor biosynthesis; adenosylcobalamin biosynthesis; precorrin-2 from uroporphyrinogen III: step 1/1. Its pathway is cofactor biosynthesis; adenosylcobalamin biosynthesis; sirohydrochlorin from precorrin-2: step 1/1. The protein operates within porphyrin-containing compound metabolism; siroheme biosynthesis; precorrin-2 from uroporphyrinogen III: step 1/1. It functions in the pathway porphyrin-containing compound metabolism; siroheme biosynthesis; siroheme from sirohydrochlorin: step 1/1. It participates in porphyrin-containing compound metabolism; siroheme biosynthesis; sirohydrochlorin from precorrin-2: step 1/1. Multifunctional enzyme that catalyzes the SAM-dependent methylations of uroporphyrinogen III at position C-2 and C-7 to form precorrin-2 via precorrin-1. Then it catalyzes the NAD-dependent ring dehydrogenation of precorrin-2 to yield sirohydrochlorin. Finally, it catalyzes the ferrochelation of sirohydrochlorin to yield siroheme. In Vesicomyosocius okutanii subsp. Calyptogena okutanii (strain HA), this protein is Siroheme synthase.